Reading from the N-terminus, the 375-residue chain is Erythronate-4-phosphate dehydrogenase (375 aa).

Serine 49 lines the substrate pocket. The NAD(+) site is built by aspartate 150 and threonine 178. Arginine 211 is an active-site residue. Aspartate 231 is an NAD(+) binding site. Residue glutamate 236 is part of the active site. The active-site Proton donor is the histidine 253. Glycine 256 lines the NAD(+) pocket.

This sequence belongs to the D-isomer specific 2-hydroxyacid dehydrogenase family. PdxB subfamily. In terms of assembly, homodimer.

Its subcellular location is the cytoplasm. It carries out the reaction 4-phospho-D-erythronate + NAD(+) = (R)-3-hydroxy-2-oxo-4-phosphooxybutanoate + NADH + H(+). It functions in the pathway cofactor biosynthesis; pyridoxine 5'-phosphate biosynthesis; pyridoxine 5'-phosphate from D-erythrose 4-phosphate: step 2/5. Its function is as follows. Catalyzes the oxidation of erythronate-4-phosphate to 3-hydroxy-2-oxo-4-phosphonooxybutanoate. The sequence is that of Erythronate-4-phosphate dehydrogenase from Hydrogenovibrio crunogenus (strain DSM 25203 / XCL-2) (Thiomicrospira crunogena).